The primary structure comprises 111 residues: Wound-induced proteinase inhibitor 1 (111 aa).

A signal peptide spans 1-23 (MEAKFAHIILFFLLAFSFETLMA). Residues 24 to 36 (RKESDGPEVIKLL) constitute a propeptide that is removed on maturation.

This sequence belongs to the protease inhibitor I13 (potato type I serine protease inhibitor) family.

The protein resides in the secreted. In Solanum peruvianum (Peruvian tomato), this protein is Wound-induced proteinase inhibitor 1.